Reading from the N-terminus, the 70-residue chain is Large ribosomal subunit protein bL31 (70 aa).

Residues Cys-16, Cys-18, Cys-37, and Cys-40 each coordinate Zn(2+).

It belongs to the bacterial ribosomal protein bL31 family. Type A subfamily. Part of the 50S ribosomal subunit. The cofactor is Zn(2+).

Its function is as follows. Binds the 23S rRNA. This is Large ribosomal subunit protein bL31 from Shewanella frigidimarina (strain NCIMB 400).